The primary structure comprises 202 residues: Histone H1 (202 aa).

Disordered regions lie at residues 1–50 (MTAI…VTHP) and 114–202 (YKLS…KIAV). Residues 18–38 (EASKVKEQAPATDKKPRAPKE) show a composition bias toward basic and acidic residues. An H15 domain is found at 48–118 (THPPYFQMIK…KIKASYKLSE (71 aa)). Positions 160–202 (KAKATPKPKKVGAKRTRKSTPAKAKQPKSIKSPAAKRAKKIAV) are enriched in basic residues.

This sequence belongs to the histone H1/H5 family.

It localises to the nucleus. The protein localises to the chromosome. Histones H1 are necessary for the condensation of nucleosome chains into higher-order structures. The protein is Histone H1 of Solanum pennellii (Tomato).